Reading from the N-terminus, the 215-residue chain is MIKLTARQQQVFDLIRRAIERSGFPPTRAEIAAELGFSSPNAAEEHLRALARKGVIELAAGASRGIRLLGLDDAPHQLTLPHAALMQLSLPLVGRVAAGSPILAQEHISQHYACDPALFSSKPDYLLKVRGLSMRDAGILDGDLLAVQKRAEAKDGQIIVARLGDDVTVKRLKRRPGGVELIAENPDYENIFVKAGSAEFALEGIAVGLIRPGEF.

The H-T-H motif DNA-binding region spans 28-48; that stretch reads RAEIAAELGFSSPNAAEEHLR. Residues S133 and K170 each act as for autocatalytic cleavage activity in the active site.

It belongs to the peptidase S24 family. Homodimer.

It carries out the reaction Hydrolysis of Ala-|-Gly bond in repressor LexA.. Represses a number of genes involved in the response to DNA damage (SOS response), including recA and lexA. In the presence of single-stranded DNA, RecA interacts with LexA causing an autocatalytic cleavage which disrupts the DNA-binding part of LexA, leading to derepression of the SOS regulon and eventually DNA repair. In Burkholderia thailandensis (strain ATCC 700388 / DSM 13276 / CCUG 48851 / CIP 106301 / E264), this protein is LexA repressor.